The following is a 665-amino-acid chain: MVEAIVEFDYQAQHDDELTISVGEIITNIRKEDGGWWEGQINGRRGLFPDNFVREIKKEMKKDPLTNKAPEKPLHEVPSGNSLLSSETILRTNKRGERRRRRCQVAFSYLPQNDDELELKVGDIIEVVGEVEEGWWEGVLNGKTGMFPSNFIKELSGESDELGISQDEQLSKSSLRETTGSESDGGDSSSTKSEGANGTVATAAIQPKKVKGVGFGDIFKDKPIKLRPRSIEVENDFLPVEKTIGKKLPATTATPDSSKTEMDSRTKSKDYCKVIFPYEAQNDDELTIKEGDIVTLINKDCIDVGWWEGELNGRRGVFPDNFVKLLPPDFEKEGNRPKKPPPPSAPVIKQGAGTTERKHEIKKIPPERPEMLPNRTEEKERPEREPKLDLQKPSVPAIPPKKPRPPKTNSLSRPGALPPRRPERPVGPLTHTRGDSPKIDLAGSSLSGILDKDLSDRSNDIDLEGFDSVVSSTEKLSHPTTSRPKATGRRPPSQSLTSSSLSSPDIFDSPSPEEDKEEHISLAHRGVDASKKTSKTVTISQVSDNKASLPPKPGTMAAGGGGPAPLSSAAPSPLSSSLGTAGHRANSPSLFGTEGKPKMEPAASSQAAVEELRTQVRELRSIIETMKDQQKREIKQLLSELDEEKKIRLRLQMEVNDIKKALQSK.

2 SH3 domains span residues 1–58 (MVEA…EIKK) and 98–157 (RRRR…ELSG). Phosphoserine occurs at positions 156, 159, 183, and 230. Residues 159–200 (SDELGISQDEQLSKSSLRETTGSESDGGDSSSTKSEGANGTV) are disordered. The segment covering 177 to 195 (ETTGSESDGGDSSSTKSEG) has biased composition (low complexity). Position 254 is a phosphothreonine (threonine 254). The SH3 3 domain maps to 267–328 (KSKDYCKVIF…PDNFVKLLPP (62 aa)). Disordered stretches follow at residues 328-444 (PDFE…LAGS) and 467-610 (DSVV…AAVE). Residues 355–390 (TERKHEIKKIPPERPEMLPNRTEEKERPEREPKLDL) show a composition bias toward basic and acidic residues. A Phosphoserine modification is found at serine 436. Over residues 469 to 484 (VVSSTEKLSHPTTSRP) the composition is skewed to polar residues. Over residues 491 to 510 (PPSQSLTSSSLSSPDIFDSP) the composition is skewed to low complexity. Phosphoserine occurs at positions 509, 511, and 521. The span at 517–531 (EEHISLAHRGVDASK) shows a compositional bias: basic and acidic residues. Residues 535 to 546 (KTVTISQVSDNK) are compositionally biased toward polar residues. A compositionally biased stretch (low complexity) spans 564–582 (APLSSAAPSPLSSSLGTAG). Serine 587 is modified (phosphoserine). The stretch at 602-664 (AASSQAAVEE…VNDIKKALQS (63 aa)) forms a coiled coil.

In terms of assembly, can self-associate and form homotetramers. Interacts with CD2, F-actin capping protein, PIK3R3, GRB2, EGFR, MET, BLNK, MAP3K4, PDCD6IP, SPRY2, ARHGAP17, ARHGAP27, MAGI2, CRK, BCAR1, SOS1, ASAP1, ARAP3, HIP1R, SYNJ2, INPP5D and STAP1. Interacts with E3 ubiquitin-protein ligases CBL and CBLB, but does not interact with CBLC. Two molecules of SH3KBP1 seem to bind through their respective SH3 1 domain to one molecule of CBLB. The interaction with CBL or CBLB and EGFR is increased upon EGF stimulation. The interaction with CBL is attenuated by PDCD6IP. Interacts (via SH3 domains) with ARAP1. The interaction is independent of EGF and does not affect ARAP1 GTPase-activating activity but is involved in regulating ubiquitination and endocytic trafficking of EGFR. ARAP1 competes with CBL for binding to SH3KBP1 and prevents interaction of CBL with SH3KBP1; this is likely to regulate SH3KBP1-mediated internalization of EGFR. Interacts through its proline-rich region with the SH3 domain of endophilins SH3GL1, SH3GL2 and SH3GL3. The SH3KBP1-endophilin complex seems to associate with a complex containing the phosphorylated receptor (EGFR or MET) and phosphorylated CBL. Probably associates with ASAP1 and phosphorylated EGFR. Probably part of a complex consisting of at least SH3KBP1, ASAP1 and ARAP3. Interacts with focal adhesion kinases PTK2/FAK1 and PTK2B/PYK2, probably as a dimer. Interacts with DAB2 and probably associates with chathrin through its interaction with DAB2. Part of a complex consisting of SH3KBP1, DAB2, and clathrin heavy chain. DAB2 and clathrin dissociate from SH3KBP1 following growth factor treatment, enabling interaction with CBL. Interacts with DDN and probably associates with MAGI2 through its interaction with DDN. Interacts with the SH3 domains of SRC tyrosine-protein kinases SRC, LCK, LYN, FGR, FYN and HCK. Interacts with TRADD, BIRC2, TRAF1, TRAF2 and TNFR1, and the association with a TNFR1-associated complex upon stimulation with TNF-alpha seems to be mediated by SRC. Interacts (via SH3 domains) with SHKBP1 (via PXXXPR motifs). Interaction with CBL is abolished in the presence of SHKBP1. Interacts (via SH3 domains) with ZFP36 (via extreme C-terminal region). Interacts with MAP3K4; this interaction enhances the association with ZFP36. (Microbial infection) Interacts (via SH3 domains) with Chikungunya virus non-structural protein 3 (via C-terminus); this interaction plays a role in initiation of viral replication. In terms of processing, monoubiquitinated by CBL and CBLB after EGF stimulation; probably on its C-terminus. As to expression, ubiquitously expressed. Also expressed in some cancer cell lines.

The protein resides in the cytoplasm. It localises to the cytoskeleton. Its subcellular location is the cytoplasmic vesicle membrane. It is found in the synapse. The protein localises to the synaptosome. The protein resides in the cell junction. It localises to the focal adhesion. In terms of biological role, adapter protein involved in regulating diverse signal transduction pathways. Involved in the regulation of endocytosis and lysosomal degradation of ligand-induced receptor tyrosine kinases, including EGFR and MET/hepatocyte growth factor receptor, through an association with CBL and endophilins. The association with CBL, and thus the receptor internalization, may be inhibited by an interaction with PDCD6IP and/or SPRY2. Involved in regulation of ligand-dependent endocytosis of the IgE receptor. Attenuates phosphatidylinositol 3-kinase activity by interaction with its regulatory subunit. May be involved in regulation of cell adhesion; promotes the interaction between TTK2B and PDCD6IP. May be involved in the regulation of cellular stress response via the MAPK pathways through its interaction with MAP3K4. Is involved in modulation of tumor necrosis factor mediated apoptosis. Plays a role in the regulation of cell morphology and cytoskeletal organization. Required in the control of cell shape and migration. Has an essential role in the stimulation of B cell activation. This chain is SH3 domain-containing kinase-binding protein 1 (SH3KBP1), found in Homo sapiens (Human).